The sequence spans 222 residues: MTETSPPPVLDTAQARVLGCLIEKEATTPDAYPLTVNAAQVAANQKTAREPVLNLQTGVVHHALRQLETLGLVRQQFSSRAERYEHRLGSVLDLTRQQVALIGLLLLRGAQTLGELYARSERLARFNDADDMRHHLDRLIQRGLAAQLPRASGQREDRYAHLLSGELDVEALQAAAARAAPSARSGSDTSDLEARMQALEATVVELQEALAAVQARLDAAGA.

The protein belongs to the UPF0502 family.

The polypeptide is UPF0502 protein XAC4278 (Xanthomonas axonopodis pv. citri (strain 306)).